The chain runs to 581 residues: DNA polymerase alpha subunit B (581 aa).

Belongs to the DNA polymerase alpha subunit B family. As to quaternary structure, DNA polymerase alpha:primase is a four subunit enzyme complex, which is assembled throughout the cell cycle, and consists of the two DNA polymerase subunits A and B, and the DNA primase large and small subunits. Subunit B binds to subunit A.

It localises to the nucleus. Functionally, may play an essential role at the early stage of chromosomal DNA replication by coupling the polymerase alpha/primase complex to the cellular replication machinery. Required for the distribution of pie-1 in cell divsion. The protein is DNA polymerase alpha subunit B (div-1) of Caenorhabditis elegans.